The following is a 564-amino-acid chain: Dihydroxy-acid dehydratase (564 aa).

Cys55 is a binding site for [2Fe-2S] cluster. Position 87 (Asp87) interacts with Mg(2+). Cys128 provides a ligand contact to [2Fe-2S] cluster. Mg(2+)-binding residues include Asp129 and Lys130. At Lys130 the chain carries N6-carboxylysine. Position 200 (Cys200) interacts with [2Fe-2S] cluster. Glu452 is a binding site for Mg(2+). Ser478 acts as the Proton acceptor in catalysis.

It belongs to the IlvD/Edd family. As to quaternary structure, homodimer. The cofactor is [2Fe-2S] cluster. Mg(2+) serves as cofactor.

The enzyme catalyses (2R)-2,3-dihydroxy-3-methylbutanoate = 3-methyl-2-oxobutanoate + H2O. It catalyses the reaction (2R,3R)-2,3-dihydroxy-3-methylpentanoate = (S)-3-methyl-2-oxopentanoate + H2O. Its pathway is amino-acid biosynthesis; L-isoleucine biosynthesis; L-isoleucine from 2-oxobutanoate: step 3/4. The protein operates within amino-acid biosynthesis; L-valine biosynthesis; L-valine from pyruvate: step 3/4. Its function is as follows. Functions in the biosynthesis of branched-chain amino acids. Catalyzes the dehydration of (2R,3R)-2,3-dihydroxy-3-methylpentanoate (2,3-dihydroxy-3-methylvalerate) into 2-oxo-3-methylpentanoate (2-oxo-3-methylvalerate) and of (2R)-2,3-dihydroxy-3-methylbutanoate (2,3-dihydroxyisovalerate) into 2-oxo-3-methylbutanoate (2-oxoisovalerate), the penultimate precursor to L-isoleucine and L-valine, respectively. This Polaromonas naphthalenivorans (strain CJ2) protein is Dihydroxy-acid dehydratase.